The primary structure comprises 151 residues: NADPH-dependent 7-cyano-7-deazaguanine reductase (151 aa).

Cys-51 (thioimide intermediate) is an active-site residue. Residue Asp-58 is the Proton donor of the active site. Substrate contacts are provided by residues 73–75 and 92–93; these read VES and HE.

This sequence belongs to the GTP cyclohydrolase I family. QueF type 1 subfamily.

The protein localises to the cytoplasm. The catalysed reaction is 7-aminomethyl-7-carbaguanine + 2 NADP(+) = 7-cyano-7-deazaguanine + 2 NADPH + 3 H(+). Its pathway is tRNA modification; tRNA-queuosine biosynthesis. Catalyzes the NADPH-dependent reduction of 7-cyano-7-deazaguanine (preQ0) to 7-aminomethyl-7-deazaguanine (preQ1). In Bacteroides fragilis (strain YCH46), this protein is NADPH-dependent 7-cyano-7-deazaguanine reductase.